The chain runs to 501 residues: Glycerol kinase 1 (501 aa).

Thr-16 serves as a coordination point for ADP. 3 residues coordinate ATP: Thr-16, Thr-17, and Ser-18. Thr-16 lines the sn-glycerol 3-phosphate pocket. Arg-20 is a binding site for ADP. Sn-glycerol 3-phosphate contacts are provided by Arg-84, Glu-85, Tyr-135, and Asp-242. The glycerol site is built by Arg-84, Glu-85, Tyr-135, Asp-242, and Gln-243. Residues Thr-264 and Gly-307 each contribute to the ADP site. ATP is bound by residues Thr-264, Gly-307, Gln-311, and Gly-408. Gly-408 is a binding site for ADP.

Belongs to the FGGY kinase family.

The enzyme catalyses glycerol + ATP = sn-glycerol 3-phosphate + ADP + H(+). Its pathway is polyol metabolism; glycerol degradation via glycerol kinase pathway; sn-glycerol 3-phosphate from glycerol: step 1/1. Functionally, key enzyme in the regulation of glycerol uptake and metabolism. Catalyzes the phosphorylation of glycerol to yield sn-glycerol 3-phosphate. This chain is Glycerol kinase 1, found in Saccharolobus solfataricus (strain ATCC 35092 / DSM 1617 / JCM 11322 / P2) (Sulfolobus solfataricus).